A 93-amino-acid polypeptide reads, in one-letter code: uncharacterized protein (93 aa).

The segment at 35–72 is disordered; sequence KSVPPPTPPKPVKKTPSPTLPKPSKQKQEPQVEVNEDR. Basic and acidic residues predominate over residues 60-72; sequence QKQEPQVEVNEDR.

This is an uncharacterized protein from Ostreid herpesvirus 1 (isolate France) (OsHV-1).